A 324-amino-acid polypeptide reads, in one-letter code: Olfactory receptor 52N5 (324 aa).

Over 1 to 33 (MPLFNSLCWFPTIHVTPPSFILNGIPGLERVHV) the chain is Extracellular. Residues 34–54 (WISLPLCTMYIIFLVGNLGLV) traverse the membrane as a helical segment. Residues 55 to 62 (YLIYYEES) lie on the Cytoplasmic side of the membrane. Residues 63–84 (LHHPMYFFFGHALSLIDLLTCT) traverse the membrane as a helical segment. Residues 85-108 (TTLPNALCIFWFSLKEINFNACLA) are Extracellular-facing. The cysteines at positions 106 and 198 are disulfide-linked. A helical membrane pass occupies residues 109–129 (QMFFVHGFTGVESGVLMLMAL). Topologically, residues 130–148 (DRYVAICYPLRYATTLTNP) are cytoplasmic. The helical transmembrane segment at 149–169 (IIAKAELATFLRGVLLMIPFP) threads the bilayer. Residues 170–205 (FLVKRLPFCQSNIISHTYCDHMSVVKLSCASIKVNV) lie on the Extracellular side of the membrane. Residues 206-226 (IYGLMVALLIGVFDICCISLS) traverse the membrane as a helical segment. Over 227–246 (YTLILKAAISLSSSDARQKA) the chain is Cytoplasmic. Residues 247–267 (FSTCTAHISAIIITYVPAFFT) traverse the membrane as a helical segment. The Extracellular portion of the chain corresponds to 268-283 (FFAHRFGGHTIPPSLH). A helical membrane pass occupies residues 284–304 (IIVANLYLLLPPTLNPIVYGV). Residues 305–324 (KTKQIRKSVIKFFQGDKGAG) are Cytoplasmic-facing.

This sequence belongs to the G-protein coupled receptor 1 family.

Its subcellular location is the cell membrane. Functionally, odorant receptor. This Homo sapiens (Human) protein is Olfactory receptor 52N5 (OR52N5).